We begin with the raw amino-acid sequence, 128 residues long: uncharacterized protein (128 aa).

Positions 2 to 127 (KLLQIRLLVN…DHNLIEIYKM (126 aa)) constitute a VOC domain. Positions 48 and 123 each coordinate Ni(2+).

This sequence belongs to the glyoxalase I family.

This is an uncharacterized protein from Bacillus subtilis (strain 168).